Here is a 225-residue protein sequence, read N- to C-terminus: Phosphoribosylformylglycinamidine synthase subunit PurQ (225 aa).

A Glutamine amidotransferase type-1 domain is found at 5-225; the sequence is RFGIVVFPGS…WQSIVQSLAG (221 aa). C89 serves as the catalytic Nucleophile. Active-site residues include H198 and E200.

As to quaternary structure, part of the FGAM synthase complex composed of 1 PurL, 1 PurQ and 2 PurS subunits.

It localises to the cytoplasm. The catalysed reaction is N(2)-formyl-N(1)-(5-phospho-beta-D-ribosyl)glycinamide + L-glutamine + ATP + H2O = 2-formamido-N(1)-(5-O-phospho-beta-D-ribosyl)acetamidine + L-glutamate + ADP + phosphate + H(+). It catalyses the reaction L-glutamine + H2O = L-glutamate + NH4(+). The protein operates within purine metabolism; IMP biosynthesis via de novo pathway; 5-amino-1-(5-phospho-D-ribosyl)imidazole from N(2)-formyl-N(1)-(5-phospho-D-ribosyl)glycinamide: step 1/2. Functionally, part of the phosphoribosylformylglycinamidine synthase complex involved in the purines biosynthetic pathway. Catalyzes the ATP-dependent conversion of formylglycinamide ribonucleotide (FGAR) and glutamine to yield formylglycinamidine ribonucleotide (FGAM) and glutamate. The FGAM synthase complex is composed of three subunits. PurQ produces an ammonia molecule by converting glutamine to glutamate. PurL transfers the ammonia molecule to FGAR to form FGAM in an ATP-dependent manner. PurS interacts with PurQ and PurL and is thought to assist in the transfer of the ammonia molecule from PurQ to PurL. This is Phosphoribosylformylglycinamidine synthase subunit PurQ from Synechococcus sp. (strain JA-3-3Ab) (Cyanobacteria bacterium Yellowstone A-Prime).